We begin with the raw amino-acid sequence, 124 residues long: Small ribosomal subunit protein uS12 (124 aa).

D89 is subject to 3-methylthioaspartic acid.

Belongs to the universal ribosomal protein uS12 family. In terms of assembly, part of the 30S ribosomal subunit. Contacts proteins S8 and S17. May interact with IF1 in the 30S initiation complex.

Its function is as follows. With S4 and S5 plays an important role in translational accuracy. Interacts with and stabilizes bases of the 16S rRNA that are involved in tRNA selection in the A site and with the mRNA backbone. Located at the interface of the 30S and 50S subunits, it traverses the body of the 30S subunit contacting proteins on the other side and probably holding the rRNA structure together. The combined cluster of proteins S8, S12 and S17 appears to hold together the shoulder and platform of the 30S subunit. The protein is Small ribosomal subunit protein uS12 of Erwinia amylovora (Fire blight bacteria).